We begin with the raw amino-acid sequence, 160 residues long: Deoxyuridine 5'-triphosphate nucleotidohydrolase (160 aa).

Residues 79 to 81 (RSG), asparagine 92, 96 to 98 (TVD), and lysine 106 contribute to the substrate site.

This sequence belongs to the dUTPase family. It depends on Mg(2+) as a cofactor.

The enzyme catalyses dUTP + H2O = dUMP + diphosphate + H(+). Its pathway is pyrimidine metabolism; dUMP biosynthesis; dUMP from dCTP (dUTP route): step 2/2. In terms of biological role, this enzyme is involved in nucleotide metabolism: it produces dUMP, the immediate precursor of thymidine nucleotides and it decreases the intracellular concentration of dUTP so that uracil cannot be incorporated into DNA. This chain is Deoxyuridine 5'-triphosphate nucleotidohydrolase, found in Rhizobium meliloti (strain 1021) (Ensifer meliloti).